A 452-amino-acid polypeptide reads, in one-letter code: Bifunctional protein GlmU (452 aa).

Residues Met1 to Arg226 are pyrophosphorylase. Residues Leu7–Gly10, Lys21, Gln73, and Gly78–Thr79 each bind UDP-N-acetyl-alpha-D-glucosamine. Asp103 is a Mg(2+) binding site. UDP-N-acetyl-alpha-D-glucosamine contacts are provided by Gly140, Glu155, Asn170, and Asn224. Asn224 contributes to the Mg(2+) binding site. A linker region spans residues Leu227–Ala247. The segment at Gly248 to Gln452 is N-acetyltransferase. UDP-N-acetyl-alpha-D-glucosamine is bound by residues Arg329 and Lys347. The Proton acceptor role is filled by His359. Residues Tyr362 and Asn373 each contribute to the UDP-N-acetyl-alpha-D-glucosamine site. Residues Ala376, Asn382–Tyr383, Ala419, and Arg436 each bind acetyl-CoA.

In the N-terminal section; belongs to the N-acetylglucosamine-1-phosphate uridyltransferase family. It in the C-terminal section; belongs to the transferase hexapeptide repeat family. As to quaternary structure, homotrimer. Requires Mg(2+) as cofactor.

It localises to the cytoplasm. The catalysed reaction is alpha-D-glucosamine 1-phosphate + acetyl-CoA = N-acetyl-alpha-D-glucosamine 1-phosphate + CoA + H(+). It carries out the reaction N-acetyl-alpha-D-glucosamine 1-phosphate + UTP + H(+) = UDP-N-acetyl-alpha-D-glucosamine + diphosphate. The protein operates within nucleotide-sugar biosynthesis; UDP-N-acetyl-alpha-D-glucosamine biosynthesis; N-acetyl-alpha-D-glucosamine 1-phosphate from alpha-D-glucosamine 6-phosphate (route II): step 2/2. It functions in the pathway nucleotide-sugar biosynthesis; UDP-N-acetyl-alpha-D-glucosamine biosynthesis; UDP-N-acetyl-alpha-D-glucosamine from N-acetyl-alpha-D-glucosamine 1-phosphate: step 1/1. It participates in bacterial outer membrane biogenesis; LPS lipid A biosynthesis. Catalyzes the last two sequential reactions in the de novo biosynthetic pathway for UDP-N-acetylglucosamine (UDP-GlcNAc). The C-terminal domain catalyzes the transfer of acetyl group from acetyl coenzyme A to glucosamine-1-phosphate (GlcN-1-P) to produce N-acetylglucosamine-1-phosphate (GlcNAc-1-P), which is converted into UDP-GlcNAc by the transfer of uridine 5-monophosphate (from uridine 5-triphosphate), a reaction catalyzed by the N-terminal domain. This chain is Bifunctional protein GlmU, found in Synechococcus sp. (strain ATCC 27144 / PCC 6301 / SAUG 1402/1) (Anacystis nidulans).